The sequence spans 95 residues: Fungal defensin plectasin (95 aa).

Residues 1–23 (MQFTTILSIGITVFGLLNTGAFA) form the signal peptide. Residues 24 to 55 (APQPVPEAYAVSDPEAHPDDFAGMDANQLQKR) constitute a propeptide that is removed on maturation. F57, G58, and C59 together coordinate beta-D-GlcNAc-(1-&gt;4)-Mur2Ac(oyl-L-Ala-gamma-D-Glu-L-Lys-D-Ala-D-Ala)-di-trans,octa-cis-undecaprenyl diphosphate. 3 disulfide bridges follow: C59–C85, C70–C92, and C74–C94. Residues 61–64 (GPWD) are binds to membrane interface. Beta-D-GlcNAc-(1-&gt;4)-Mur2Ac(oyl-L-Ala-gamma-D-Glu-L-Lys-D-Ala-D-Ala)-di-trans,octa-cis-undecaprenyl diphosphate contacts are provided by D67, H73, Y84, A86, G88, C92, and K93. The segment at 86-92 (AKGGFVC) is binds to membrane interface.

It belongs to the invertebrate defensin family. Type 2 subfamily.

The protein resides in the secreted. Its subcellular location is the host cell membrane. Its function is as follows. Antimicrobial peptide that potently acts against several species of Gram-positive bacteria. It selectively inhibits peptidoglycan biosynthesis through complex formation with the cell wall precursor lipid II (1:1 molar ratio) thus inhibiting cell wall synthesis. It does not disrupt cell membranes. Is especially active against numerous clinical isolates of S.pneumoniae, including all 90 different serotypes and isolates resistant to clinically used antibiotics. In vitro, shows considerable selectivity for bacteria over mammalian cells. The peptide synthesized in D-amino acids does not show antibacterial activity. In vitro, acts on voltage-gated potassium channels by moderately inhibiting mammalian Kv1.3/KCNA3 (IC(50)=2.8 uM), and moderately inhibiting others potassium channels. The sequence is that of Fungal defensin plectasin (DEF) from Pseudoplectania nigrella (Ebony cup).